A 307-amino-acid polypeptide reads, in one-letter code: Taste receptor type 2 member 41 (307 aa).

Residues 1 to 7 (MQAALTA) lie on the Extracellular side of the membrane. A helical transmembrane segment spans residues 8-28 (FFMLLFSLLSLLGIAANGFIV). Topologically, residues 29–40 (LVLGREWLRYGR) are cytoplasmic. A helical membrane pass occupies residues 41–61 (LLPLDMILISLGASRFCLQLV). The Extracellular segment spans residues 62-88 (GTVHNFYYSAQKVEYSGGLGRQFFHLH). A helical membrane pass occupies residues 89-109 (WHFLNSATFWFCSWLSVLFCV). At 110 to 129 (KIANITHPTFLWLKWRFPGW) the chain is on the cytoplasmic side. Residues 130 to 150 (VPWLLLGSVLISFIITLLFFW) form a helical membrane-spanning segment. Residues 151–183 (VNYPAYQEFLIRKFSVNMTYKWNTRIETYYFPS) are Extracellular-facing. N-linked (GlcNAc...) asparagine glycosylation is present at Asn167. A helical membrane pass occupies residues 184 to 204 (LKLVIWSIPFSVFLVSIMLLI). The Cytoplasmic segment spans residues 205–234 (NSLRRHTQRMQHNGHSLQDPSTQAHTRALK). A helical membrane pass occupies residues 235-255 (SLISFLILYALSFLSLIIDAT). Residues 256–264 (KFISMQNDF) are Extracellular-facing. The helical transmembrane segment at 265 to 285 (YWPWQIAVYLCISVHPFILIF) threads the bilayer. The Cytoplasmic portion of the chain corresponds to 286-307 (SNLKLRSVFSQLLLLARGFWVA).

The protein belongs to the G-protein coupled receptor T2R family.

Its subcellular location is the membrane. Functionally, receptor that may play a role in the perception of bitterness and is gustducin-linked. May play a role in sensing the chemical composition of the gastrointestinal content. The activity of this receptor may stimulate alpha gustducin, mediate PLC-beta-2 activation and lead to the gating of TRPM5. This chain is Taste receptor type 2 member 41 (TAS2R41), found in Pan troglodytes (Chimpanzee).